A 417-amino-acid chain; its full sequence is XO lethal protein 1 (417 aa).

The segment at 373-417 (VSPGETSSEGISDEHHYEEYDEDDIMEEEEAPSARQDDTYDEDEE) is disordered. The span at 391–403 (EYDEDDIMEEEEA) shows a compositional bias: acidic residues.

Belongs to the GHMP kinase family. Xol-1 subfamily.

The protein localises to the nucleus. In terms of biological role, sex-determining factor that is required for sexual differentiation and X chromosome dosage compensation to promote male development. High expression during gastrulation triggers male development, while low expression at that time triggers hermaphrodite development. Although related to GHMP kinase, its mode of action remains unclear. The sequence is that of XO lethal protein 1 from Caenorhabditis elegans.